We begin with the raw amino-acid sequence, 420 residues long: Threonine aspartase 1 (420 aa).

The interval 1–25 (MIMEKGMNSGEGLPSRSSQASAAKV) is disordered. The active-site Nucleophile is the Thr234.

Belongs to the Ntn-hydrolase family. Intramolecular proteolysis generates 2 subunits, alpha and beta, which reassemble through a non-covalent association to form the fully active enzyme.

Its function is as follows. Protease responsible for KMT2A/MLL1 and KMT2D/MLL2 processing and activation. Through substrate activation, it controls the expression of HOXA genes, and the expression of key cell cycle regulators including CCNA1, CCNB1, CCNE1 and CDKN2A. The sequence is that of Threonine aspartase 1 (Tasp1) from Mus musculus (Mouse).